Reading from the N-terminus, the 299-residue chain is UDP-N-acetylenolpyruvoylglucosamine reductase (299 aa).

One can recognise an FAD-binding PCMH-type domain in the interval Arg-21–Gly-189. Arg-168 is a catalytic residue. The Proton donor role is filled by Ser-219. Glu-289 is an active-site residue.

The protein belongs to the MurB family. FAD serves as cofactor.

The protein localises to the cytoplasm. It carries out the reaction UDP-N-acetyl-alpha-D-muramate + NADP(+) = UDP-N-acetyl-3-O-(1-carboxyvinyl)-alpha-D-glucosamine + NADPH + H(+). It functions in the pathway cell wall biogenesis; peptidoglycan biosynthesis. Its function is as follows. Cell wall formation. The chain is UDP-N-acetylenolpyruvoylglucosamine reductase from Parasynechococcus marenigrum (strain WH8102).